The primary structure comprises 364 residues: UDP-N-acetylglucosamine--N-acetylmuramyl-(pentapeptide) pyrophosphoryl-undecaprenol N-acetylglucosamine transferase (364 aa).

UDP-N-acetyl-alpha-D-glucosamine is bound by residues 14–16, Asn-126, Arg-163, Ser-190, Ile-246, 265–270, and Gln-291; these read TGG and ALTVSE.

Belongs to the glycosyltransferase 28 family. MurG subfamily.

It localises to the cell inner membrane. It carries out the reaction di-trans,octa-cis-undecaprenyl diphospho-N-acetyl-alpha-D-muramoyl-L-alanyl-D-glutamyl-meso-2,6-diaminopimeloyl-D-alanyl-D-alanine + UDP-N-acetyl-alpha-D-glucosamine = di-trans,octa-cis-undecaprenyl diphospho-[N-acetyl-alpha-D-glucosaminyl-(1-&gt;4)]-N-acetyl-alpha-D-muramoyl-L-alanyl-D-glutamyl-meso-2,6-diaminopimeloyl-D-alanyl-D-alanine + UDP + H(+). Its pathway is cell wall biogenesis; peptidoglycan biosynthesis. In terms of biological role, cell wall formation. Catalyzes the transfer of a GlcNAc subunit on undecaprenyl-pyrophosphoryl-MurNAc-pentapeptide (lipid intermediate I) to form undecaprenyl-pyrophosphoryl-MurNAc-(pentapeptide)GlcNAc (lipid intermediate II). This is UDP-N-acetylglucosamine--N-acetylmuramyl-(pentapeptide) pyrophosphoryl-undecaprenol N-acetylglucosamine transferase from Shewanella loihica (strain ATCC BAA-1088 / PV-4).